The chain runs to 258 residues: 5'-nucleotidase SurE (258 aa).

Positions 14, 15, 45, and 101 each coordinate a divalent metal cation.

The protein belongs to the SurE nucleotidase family. Requires a divalent metal cation as cofactor.

It localises to the cytoplasm. The enzyme catalyses a ribonucleoside 5'-phosphate + H2O = a ribonucleoside + phosphate. In terms of biological role, nucleotidase that shows phosphatase activity on nucleoside 5'-monophosphates. The polypeptide is 5'-nucleotidase SurE (Chlorobium phaeobacteroides (strain DSM 266 / SMG 266 / 2430)).